The following is a 428-amino-acid chain: Glutamate-1-semialdehyde 2,1-aminomutase (428 aa).

The residue at position 267 (K267) is an N6-(pyridoxal phosphate)lysine.

The protein belongs to the class-III pyridoxal-phosphate-dependent aminotransferase family. HemL subfamily. In terms of assembly, homodimer. It depends on pyridoxal 5'-phosphate as a cofactor.

The protein resides in the cytoplasm. It catalyses the reaction (S)-4-amino-5-oxopentanoate = 5-aminolevulinate. Its pathway is porphyrin-containing compound metabolism; protoporphyrin-IX biosynthesis; 5-aminolevulinate from L-glutamyl-tRNA(Glu): step 2/2. This chain is Glutamate-1-semialdehyde 2,1-aminomutase, found in Pelobacter propionicus (strain DSM 2379 / NBRC 103807 / OttBd1).